The following is a 263-amino-acid chain: Glucosamine-6-phosphate deaminase (263 aa).

The active-site Proton acceptor; for enolization step is aspartate 67. Asparagine 136 (for ring-opening step) is an active-site residue. Histidine 138 serves as the catalytic Proton acceptor; for ring-opening step. Glutamate 143 acts as the For ring-opening step in catalysis.

The protein belongs to the glucosamine/galactosamine-6-phosphate isomerase family. NagB subfamily. As to quaternary structure, homohexamer.

The catalysed reaction is alpha-D-glucosamine 6-phosphate + H2O = beta-D-fructose 6-phosphate + NH4(+). The protein operates within amino-sugar metabolism; N-acetylneuraminate degradation; D-fructose 6-phosphate from N-acetylneuraminate: step 5/5. Functionally, catalyzes the reversible isomerization-deamination of glucosamine 6-phosphate (GlcN6P) to form fructose 6-phosphate (Fru6P) and ammonium ion. The polypeptide is Glucosamine-6-phosphate deaminase (Shewanella halifaxensis (strain HAW-EB4)).